The sequence spans 256 residues: Protein CC2D2B homolog (256 aa).

A disordered region spans residues 1–24 (MSEEMDNVTAEEITDKHLQKDLDA). A compositionally biased stretch (basic and acidic residues) spans 13–22 (ITDKHLQKDL). Coiled-coil stretches lie at residues 136-159 (DLLKVKAADYEDDQEQIKKQKANI) and 194-214 (EIYKKTCNKMENRLLKLEEGK).

The protein is Protein CC2D2B homolog of Macaca fascicularis (Crab-eating macaque).